Reading from the N-terminus, the 176-residue chain is Cytochrome b (176 aa).

3 consecutive transmembrane segments (helical) span residues 33 to 53 (FGSL…FLAM), 77 to 98 (WVLR…YLHV), and 113 to 133 (WNVG…GYVL). Heme b is bound by residues histidine 83 and histidine 97.

The protein belongs to the cytochrome b family. The cytochrome bc1 complex contains 11 subunits: 3 respiratory subunits (MT-CYB, CYC1 and UQCRFS1), 2 core proteins (UQCRC1 and UQCRC2) and 6 low-molecular weight proteins (UQCRH/QCR6, UQCRB/QCR7, UQCRQ/QCR8, UQCR10/QCR9, UQCR11/QCR10 and a cleavage product of UQCRFS1). This cytochrome bc1 complex then forms a dimer. Heme b serves as cofactor.

The protein resides in the mitochondrion inner membrane. In terms of biological role, component of the ubiquinol-cytochrome c reductase complex (complex III or cytochrome b-c1 complex) that is part of the mitochondrial respiratory chain. The b-c1 complex mediates electron transfer from ubiquinol to cytochrome c. Contributes to the generation of a proton gradient across the mitochondrial membrane that is then used for ATP synthesis. The chain is Cytochrome b (MT-CYB) from Corynorhinus rafinesquii (Rafinesque's big-eared bat).